A 314-amino-acid polypeptide reads, in one-letter code: Ribosomal RNA small subunit methyltransferase H (314 aa).

S-adenosyl-L-methionine is bound by residues 37-39 (GSH), Asp57, Phe84, Asp105, and Gln112.

The protein belongs to the methyltransferase superfamily. RsmH family.

Its subcellular location is the cytoplasm. The enzyme catalyses cytidine(1402) in 16S rRNA + S-adenosyl-L-methionine = N(4)-methylcytidine(1402) in 16S rRNA + S-adenosyl-L-homocysteine + H(+). In terms of biological role, specifically methylates the N4 position of cytidine in position 1402 (C1402) of 16S rRNA. In Fusobacterium nucleatum subsp. nucleatum (strain ATCC 25586 / DSM 15643 / BCRC 10681 / CIP 101130 / JCM 8532 / KCTC 2640 / LMG 13131 / VPI 4355), this protein is Ribosomal RNA small subunit methyltransferase H.